The following is a 903-amino-acid chain: Valine--tRNA ligase (903 aa).

Polar residues predominate over residues 1–15; the sequence is MVCVTDQNNENPSQN. The interval 1–22 is disordered; the sequence is MVCVTDQNNENPSQNRADKLPK. The 'HIGH' region motif lies at 61–71; sequence PNVTGQLHMGH. The 'KMSKS' region signature appears at 552–556; the sequence is KMSKS. Lysine 555 contributes to the ATP binding site. A coiled-coil region spans residues 836 to 902; that stretch reads TVDVAAERKR…ERITKRLEEL (67 aa).

It belongs to the class-I aminoacyl-tRNA synthetase family. ValS type 1 subfamily. As to quaternary structure, monomer.

The protein localises to the cytoplasm. It catalyses the reaction tRNA(Val) + L-valine + ATP = L-valyl-tRNA(Val) + AMP + diphosphate. Its function is as follows. Catalyzes the attachment of valine to tRNA(Val). As ValRS can inadvertently accommodate and process structurally similar amino acids such as threonine, to avoid such errors, it has a 'posttransfer' editing activity that hydrolyzes mischarged Thr-tRNA(Val) in a tRNA-dependent manner. In Corynebacterium efficiens (strain DSM 44549 / YS-314 / AJ 12310 / JCM 11189 / NBRC 100395), this protein is Valine--tRNA ligase.